The chain runs to 283 residues: Pantothenate synthetase (283 aa).

30–37 (MGFLHEGH) serves as a coordination point for ATP. Residue His-37 is the Proton donor of the active site. (R)-pantoate is bound at residue Gln-61. Gln-61 contributes to the beta-alanine binding site. ATP is bound at residue 147–150 (GKKD). Position 153 (Gln-153) interacts with (R)-pantoate. ATP is bound by residues Val-176 and 184–187 (MSSR).

The protein belongs to the pantothenate synthetase family. In terms of assembly, homodimer.

The protein resides in the cytoplasm. The catalysed reaction is (R)-pantoate + beta-alanine + ATP = (R)-pantothenate + AMP + diphosphate + H(+). Its pathway is cofactor biosynthesis; (R)-pantothenate biosynthesis; (R)-pantothenate from (R)-pantoate and beta-alanine: step 1/1. In terms of biological role, catalyzes the condensation of pantoate with beta-alanine in an ATP-dependent reaction via a pantoyl-adenylate intermediate. The sequence is that of Pantothenate synthetase from Trichlorobacter lovleyi (strain ATCC BAA-1151 / DSM 17278 / SZ) (Geobacter lovleyi).